A 111-amino-acid polypeptide reads, in one-letter code: Disintegrin subunit alpha (111 aa).

A signal peptide spans 1–20 (MIQVLLVTICLAVFPYQGSS). Residues 21–44 (IILESGNVNDYEVVYPRKITPLPK) constitute a propeptide that is removed on maturation. Residues 45 to 111 (GAVQPKNPCC…GDCPRKHFYA (67 aa)) enclose the Disintegrin domain. Disulfide bonds link C53/C76, C67/C73, C72/C97, and C85/C104. The Cell attachment site motif lies at 89–91 (RGD). Positions 110-111 (YA) are excised as a propeptide.

The protein belongs to the disintegrin family. Dimeric disintegrin subfamily. As to quaternary structure, heterodimer with subunit beta; disulfide-linked. Expressed by the venom gland.

Its subcellular location is the secreted. Its function is as follows. Acts by binding to alpha-IIb/beta-3 (ITGA2B/ITGB3) on the platelet surface and inhibits both ADP-induced platelet aggregation and platelet aggregate dissociation in human platelet-rich plasma. The sequence is that of Disintegrin subunit alpha from Agkistrodon piscivorus leucostoma (Western cottonmouth).